The sequence spans 414 residues: Protein FAM81B (414 aa).

The segment covering 1-13 (MTSETDINKSASP) has biased composition (polar residues). The interval 1–43 (MTSETDINKSASPTAAAKEQPEEPDGPLPGSASEQEKKVRFSP) is disordered. 4 coiled-coil regions span residues 70-94 (NTQR…LEQA), 121-149 (LLEN…QIKA), 188-223 (KLSG…NLDT), and 266-414 (LNLY…LQES).

The protein belongs to the FAM81 family.

This Bos taurus (Bovine) protein is Protein FAM81B (FAM81B).